The sequence spans 275 residues: Large ribosomal subunit protein uL2cz (275 aa).

2 disordered regions span residues 1 to 20 (MAIHLYKTSTPSTRNGAVDS) and 225 to 275 (NPVD…RRSK).

The protein belongs to the universal ribosomal protein uL2 family. In terms of assembly, part of the 50S ribosomal subunit.

It is found in the plastid. Its subcellular location is the chloroplast. The polypeptide is Large ribosomal subunit protein uL2cz (rpl2-A) (Populus alba (White poplar)).